We begin with the raw amino-acid sequence, 767 residues long: Ribonucleoside-diphosphate reductase large subunit (767 aa).

Substrate is bound by residues Thr-176, 191–192 (SC), Gly-222, 392–396 (NLCAE), and 578–582 (PTAGT). Cysteines 192 and 408 form a disulfide. Catalysis depends on Asn-392, which acts as the Proton acceptor. The active-site Cysteine radical intermediate is the Cys-394. Glu-396 (proton acceptor) is an active-site residue.

This sequence belongs to the ribonucleoside diphosphate reductase large chain family. As to quaternary structure, heterotetramer composed of a homodimer of the large subunit (R1) and a homodimer of the small subunit (R2). Larger multisubunit protein complex are also active, composed of (R1)n(R2)n.

The enzyme catalyses a 2'-deoxyribonucleoside 5'-diphosphate + [thioredoxin]-disulfide + H2O = a ribonucleoside 5'-diphosphate + [thioredoxin]-dithiol. Its function is as follows. Ribonucleoside-diphosphate reductase holoenzyme provides the precursors necessary for viral DNA synthesis. Allows virus growth in non-dividing cells, as well as reactivation from latency in infected hosts. Catalyzes the biosynthesis of deoxyribonucleotides from the corresponding ribonucleotides. The protein is Ribonucleoside-diphosphate reductase large subunit of Saimiri sciureus (Common squirrel monkey).